The following is a 23-amino-acid chain: Conotoxin Cl6c (23 aa).

3 disulfide bridges follow: Cys2–Cys12, Cys5–Cys17, and Cys11–Cys21.

In terms of tissue distribution, expressed by the venom duct.

It is found in the secreted. The sequence is that of Conotoxin Cl6c from Californiconus californicus (California cone).